Here is a 471-residue protein sequence, read N- to C-terminus: Metalloprotease TIKI homolog (471 aa).

The N-terminal stretch at 1 to 24 is a signal peptide; it reads MAAFTLWILVLNVFLLGFQARKLA. Over 25-449 the chain is Extracellular; the sequence is SNLKFPIQKC…SRKAAASCTP (425 aa). N-linked (GlcNAc...) asparagine glycans are attached at residues Asn226, Asn235, Asn284, and Asn342. The segment covering 369–402 has biased composition (basic residues); that stretch reads KAKKSLNTRRERRKGCRGRRKKSKRCQKKKKRKR. Residues 369-406 form a disordered region; it reads KAKKSLNTRRERRKGCRGRRKKSKRCQKKKKRKRPDYS. Residues 450–470 traverse the membrane as a helical segment; that stretch reads IWTVSLALTCAVTCLLTYSGF. Residue Arg471 is a topological domain, cytoplasmic.

This sequence belongs to the TIKI family. It depends on Mn(2+) as a cofactor. Co(2+) is required as a cofactor.

It localises to the membrane. Functionally, metalloprotease. This Nematostella vectensis (Starlet sea anemone) protein is Metalloprotease TIKI homolog.